A 285-amino-acid polypeptide reads, in one-letter code: Sulfoquinovosyl glycerol transport system permease protein SmoH (285 aa).

A run of 6 helical transmembrane segments spans residues 21-41 (FIAA…ILFT), 83-103 (FMVA…AAYA), 115-135 (ILSL…VPLF), 150-170 (LILP…VSFF), 195-215 (VVVP…FVNA), and 250-270 (PVIS…IVIF). Residues 79–270 (LFNSFMVALL…VPVAILIVIF (192 aa)) enclose the ABC transmembrane type-1 domain.

Belongs to the binding-protein-dependent transport system permease family. In terms of assembly, the complex is probably composed of two ATP-binding proteins (SmoE), two transmembrane proteins (SmoG and SmoH) and a solute-binding protein (SmoF).

It localises to the cell inner membrane. Part of the ABC transporter complex SmoEFGH involved in sulfoquinovosyl glycerol (SQGro) uptake. Responsible for the translocation of the substrate across the membrane. In Agrobacterium fabrum (strain C58 / ATCC 33970) (Agrobacterium tumefaciens (strain C58)), this protein is Sulfoquinovosyl glycerol transport system permease protein SmoH.